Here is a 357-residue protein sequence, read N- to C-terminus: tRNA/tmRNA (uracil-C(5))-methyltransferase (357 aa).

Positions 180, 209, 214, 230, and 290 each coordinate S-adenosyl-L-methionine. The active-site Nucleophile is the C315. E349 functions as the Proton acceptor in the catalytic mechanism.

The protein belongs to the class I-like SAM-binding methyltransferase superfamily. RNA M5U methyltransferase family. TrmA subfamily.

It catalyses the reaction uridine(54) in tRNA + S-adenosyl-L-methionine = 5-methyluridine(54) in tRNA + S-adenosyl-L-homocysteine + H(+). The catalysed reaction is uridine(341) in tmRNA + S-adenosyl-L-methionine = 5-methyluridine(341) in tmRNA + S-adenosyl-L-homocysteine + H(+). In terms of biological role, dual-specificity methyltransferase that catalyzes the formation of 5-methyluridine at position 54 (m5U54) in all tRNAs, and that of position 341 (m5U341) in tmRNA (transfer-mRNA). In Campylobacter jejuni subsp. jejuni serotype O:2 (strain ATCC 700819 / NCTC 11168), this protein is tRNA/tmRNA (uracil-C(5))-methyltransferase.